An 837-amino-acid chain; its full sequence is Ribosome-releasing factor 2, mitochondrial (837 aa).

A mitochondrion-targeting transit peptide spans 1 to 29 (MFSINARTKVPIWVPFIARKGFSMSTRQL). Positions 40–331 (LNTRNIGIIA…GVVDYLPSPL (292 aa)) constitute a tr-type G domain. Residues 49–56 (AHIDAGKT), 113–117 (DTPGH), and 167–170 (NKMD) each bind GTP. The tract at residues 338–359 (ITASTSKVSKKQKQKKNSKVSS) is disordered. Positions 345–355 (VSKKQKQKKNS) are enriched in basic residues.

This sequence belongs to the TRAFAC class translation factor GTPase superfamily. Classic translation factor GTPase family. EF-G/EF-2 subfamily.

The protein resides in the mitochondrion. Functionally, mitochondrial GTPase that mediates the disassembly of ribosomes from messenger RNA at the termination of mitochondrial protein biosynthesis. Not involved in the GTP-dependent ribosomal translocation step during translation elongation. The protein is Ribosome-releasing factor 2, mitochondrial of Meyerozyma guilliermondii (strain ATCC 6260 / CBS 566 / DSM 6381 / JCM 1539 / NBRC 10279 / NRRL Y-324) (Yeast).